Reading from the N-terminus, the 188-residue chain is Photosystem I assembly protein Ycf4 (188 aa).

A run of 2 helical transmembrane segments spans residues 26-48 (FFWAGISTIGGVGFLLAGLSSYF) and 63-85 (FIPQGVALLFYGVAGSTVAGYLW).

The protein belongs to the Ycf4 family.

The protein resides in the cellular thylakoid membrane. In terms of biological role, seems to be required for the assembly of the photosystem I complex. In Synechocystis sp. (strain ATCC 27184 / PCC 6803 / Kazusa), this protein is Photosystem I assembly protein Ycf4.